We begin with the raw amino-acid sequence, 492 residues long: Glutamyl-tRNA(Gln) amidotransferase subunit A (492 aa).

Catalysis depends on charge relay system residues Lys-78 and Ser-158. Ser-182 functions as the Acyl-ester intermediate in the catalytic mechanism.

It belongs to the amidase family. GatA subfamily. As to quaternary structure, heterotrimer of A, B and C subunits.

The enzyme catalyses L-glutamyl-tRNA(Gln) + L-glutamine + ATP + H2O = L-glutaminyl-tRNA(Gln) + L-glutamate + ADP + phosphate + H(+). Its function is as follows. Allows the formation of correctly charged Gln-tRNA(Gln) through the transamidation of misacylated Glu-tRNA(Gln) in organisms which lack glutaminyl-tRNA synthetase. The reaction takes place in the presence of glutamine and ATP through an activated gamma-phospho-Glu-tRNA(Gln). The polypeptide is Glutamyl-tRNA(Gln) amidotransferase subunit A (Rhodopseudomonas palustris (strain BisA53)).